Consider the following 157-residue polypeptide: Rieske domain-containing protein (157 aa).

Position 1 is an N-acetylmethionine (methionine 1). Serine 6 carries the phosphoserine modification. Rieske domains follow at residues 16–127 (TSVC…VDNG) and 17–131 (SVCV…NIYV). [2Fe-2S] cluster is bound by residues cysteine 57, histidine 59, cysteine 80, and histidine 83.

It depends on [2Fe-2S] cluster as a cofactor.

This is Rieske domain-containing protein (Rfesd) from Mus musculus (Mouse).